The following is a 414-amino-acid chain: MVGTKRVADSIDTNSDDTLTRNREVEVEAMLSRRKQLRTTTTRTTTTRTTPLSLSSSASKMNWSKNDELVILGGIVDYENETKLSYRSDWDALYRYIKDCVEAKFSKIQLINKVKNMKRKFTYNQGRSNHGEQLSFTNTDDDEIFKLSLIIWDKNESEYVSNENIDQAKDVPSGEPETNDVPCEEQDDRDVPCEEQERANIEIDNGVREKLDQAKDVPCVEQESEDVPCVEQERVSIEIDNGEKEKLDQTMDCEEQENTDVLCEEKGDKDVPCEEQENKDVPCEEQERVSIEIDNGEEEMSSEEDGVDEVGVMEDTLDSGISFQGLGKNGVKDKSEEDDVVELGVLQEIFKEDTFFQSLGRYQQKLLLQNLENVGVERRKELINEWKALFVDEQRLCVKKLTFAAKLANLGVSP.

2 disordered regions span residues 36–57 and 167–191; these read QLRT…LSSS and QAKD…DRDV. A compositionally biased stretch (low complexity) spans 38-50; that stretch reads RTTTTRTTTTRTT. The segment at 382–403 is non-canonical leucine-zipper; sequence LINEWKALFVDEQRLCVKKLTF.

Belongs to the GeBP family. Homo- and heterodimers. Interacts with GEBP, GPL1 and GPL2. Interacts with GEBP. Expressed in the apical meristem and young leaf primordia. Detected in the vascular tissues of rosette leaves, in primary and secondary roots and at the base of flowers and siliques.

Its subcellular location is the nucleus. Probable transcription factor. Involved in stress responses. Plays a repressive role in cell expansion by counteracting the positive role of CPR5 in this process, but does not regulate cell proliferation or endoreduplication. The chain is GLABROUS1 enhancer-binding protein-like 3 from Arabidopsis thaliana (Mouse-ear cress).